The primary structure comprises 382 residues: Dual-specificity RNA methyltransferase RlmN (382 aa).

Residue Glu-91 is the Proton acceptor of the active site. One can recognise a Radical SAM core domain in the interval 97-339 (ETDRGTLCIS…TTVRKTRGDD (243 aa)). A disulfide bridge links Cys-104 with Cys-344. Positions 111, 115, and 118 each coordinate [4Fe-4S] cluster. S-adenosyl-L-methionine-binding positions include 165-166 (GE), Ser-197, 219-221 (SLH), and Asn-301. The active-site S-methylcysteine intermediate is Cys-344.

It belongs to the radical SAM superfamily. RlmN family. [4Fe-4S] cluster serves as cofactor.

Its subcellular location is the cytoplasm. It catalyses the reaction adenosine(2503) in 23S rRNA + 2 reduced [2Fe-2S]-[ferredoxin] + 2 S-adenosyl-L-methionine = 2-methyladenosine(2503) in 23S rRNA + 5'-deoxyadenosine + L-methionine + 2 oxidized [2Fe-2S]-[ferredoxin] + S-adenosyl-L-homocysteine. The catalysed reaction is adenosine(37) in tRNA + 2 reduced [2Fe-2S]-[ferredoxin] + 2 S-adenosyl-L-methionine = 2-methyladenosine(37) in tRNA + 5'-deoxyadenosine + L-methionine + 2 oxidized [2Fe-2S]-[ferredoxin] + S-adenosyl-L-homocysteine. Its function is as follows. Specifically methylates position 2 of adenine 2503 in 23S rRNA and position 2 of adenine 37 in tRNAs. m2A2503 modification seems to play a crucial role in the proofreading step occurring at the peptidyl transferase center and thus would serve to optimize ribosomal fidelity. In Polaromonas sp. (strain JS666 / ATCC BAA-500), this protein is Dual-specificity RNA methyltransferase RlmN.